A 636-amino-acid chain; its full sequence is Chaperone protein DnaK (636 aa).

T197 is subject to Phosphothreonine; by autocatalysis. Residues 596-607 (LYQQAQEQQQSG) show a composition bias toward low complexity. Positions 596–636 (LYQQAQEQQQSGSSGGSSDEDVVEDAEIVDEEDEEKRDDNR) are disordered. Residues 613–636 (SDEDVVEDAEIVDEEDEEKRDDNR) show a composition bias toward acidic residues.

This sequence belongs to the heat shock protein 70 family.

Acts as a chaperone. The chain is Chaperone protein DnaK from Rubrobacter xylanophilus (strain DSM 9941 / JCM 11954 / NBRC 16129 / PRD-1).